Reading from the N-terminus, the 64-residue chain is Gallinacin-2 (64 aa).

Residues 1–22 form the signal peptide; the sequence is MRILYLLFSLLFLALQVSPGLS. Positions 23–28 are excised as a propeptide; it reads SPRRDM. 3 disulfides stabilise this stretch: C31–C57, C36–C51, and C41–C58.

As to expression, expressed in circulating heterophil granulocytes and bone marrow (at protein level). Strong expression in the bone marrow, lung and testis. Moderate expression in the bursa and intestine. Low expression in the cloaca, gall bladder, brain, pancreas, trachea, air sacs and spleen. Expressed in the vagina, ovarian stroma and the theca layer of the ovarian follicle, but not in the granulosa layer of the ovarian follicle.

The protein resides in the secreted. It is found in the cytoplasmic granule. In terms of biological role, potent antibacterial activity against the Gram-negative bacterium E.coli ML-35, and against the Gram-positive bacterium L.monocytogenes EGD. Lacks antifungal activity against C.albicans. This Gallus gallus (Chicken) protein is Gallinacin-2 (GAL2).